Here is a 285-residue protein sequence, read N- to C-terminus: Release factor glutamine methyltransferase (285 aa).

S-adenosyl-L-methionine contacts are provided by residues 119-123, E142, W175, and N191; that span reads GTGSG. 191 to 194 lines the substrate pocket; sequence NPPY.

It belongs to the protein N5-glutamine methyltransferase family. PrmC subfamily.

The enzyme catalyses L-glutaminyl-[peptide chain release factor] + S-adenosyl-L-methionine = N(5)-methyl-L-glutaminyl-[peptide chain release factor] + S-adenosyl-L-homocysteine + H(+). Functionally, methylates the class 1 translation termination release factors RF1/PrfA and RF2/PrfB on the glutamine residue of the universally conserved GGQ motif. This Burkholderia pseudomallei (strain K96243) protein is Release factor glutamine methyltransferase.